The following is a 137-amino-acid chain: TM2 domain-containing protein DDB_G0287015 (137 aa).

A TM2 domain is found at 9-57 (QASLVVAYLLLIFLGFFGVHRFYVGRTISGVVYLLTGGIFGIGYIVDFF). A run of 2 helical transmembrane segments spans residues 12 to 32 (LVVA…RFYV) and 39 to 59 (VVYL…FFLL). The disordered stretch occupies residues 106–137 (IQPQQQQYYQQPYQQQQYQPQPYQPNSPQYQP).

Belongs to the TM2 family.

Its subcellular location is the membrane. The polypeptide is TM2 domain-containing protein DDB_G0287015 (Dictyostelium discoideum (Social amoeba)).